The following is a 236-amino-acid chain: Phosphoglycolate phosphatase (236 aa).

Residue Asp23 is the Nucleophile of the active site. Mg(2+) is bound by residues Asp23 and Asp25. Lys162 contributes to the substrate binding site. Mg(2+) is bound by residues Asp185 and Asp189.

This sequence belongs to the archaeal SPP-like hydrolase family. Mg(2+) is required as a cofactor.

The catalysed reaction is 2-phosphoglycolate + H2O = glycolate + phosphate. Functionally, catalyzes the dephosphorylation of 2-phosphoglycolate. This is Phosphoglycolate phosphatase from Picrophilus torridus (strain ATCC 700027 / DSM 9790 / JCM 10055 / NBRC 100828 / KAW 2/3).